The sequence spans 714 residues: Rho-GTPase-activating protein RGD2 (714 aa).

Residues 2-441 (LSFCDYFWSE…LENDIDPTAD (440 aa)) form the F-BAR domain. The DEP domain occupies 218–298 (PKTDYKLPLI…WKNTAYMFAN (81 aa)). Positions 475–704 (VDLETRCRLD…DLLTHKKQIF (230 aa)) constitute a Rho-GAP domain.

As to quaternary structure, interacts with CDC42 and RHO5.

In terms of biological role, acts in signal transduction. Activates CDC42 and RHO5. The polypeptide is Rho-GTPase-activating protein RGD2 (RGD2) (Saccharomyces cerevisiae (strain ATCC 204508 / S288c) (Baker's yeast)).